Here is a 318-residue protein sequence, read N- to C-terminus: 2-keto-3-deoxygluconate permease (318 aa).

Transmembrane regions (helical) follow at residues 10-30, 42-62, 76-96, 105-125, 139-159, 162-182, 199-219, 224-244, 263-283, and 289-309; these read IPGG…TFTP, GLIT…GASI, VLVI…GTFL, LLAG…NGGL, AGAF…VILG, GIAT…LIGF, VQTL…LAVI, FAGI…LIIA, AGAA…FAPV, and ALVA…TALW.

It belongs to the KdgT transporter family.

Its subcellular location is the cell inner membrane. It catalyses the reaction 2-dehydro-3-deoxy-D-gluconate(in) + H(+)(in) = 2-dehydro-3-deoxy-D-gluconate(out) + H(+)(out). In terms of biological role, catalyzes the proton-dependent uptake of 2-keto-3-deoxygluconate (KDG) into the cell. This is 2-keto-3-deoxygluconate permease from Pectobacterium carotovorum subsp. carotovorum (strain PC1).